The primary structure comprises 331 residues: Ketol-acid reductoisomerase (NADP(+)) (331 aa).

The KARI N-terminal Rossmann domain maps to 2 to 182; it reads ARMYYDEDAN…GGTRGGVLET (181 aa). NADP(+) is bound by residues 25-28, serine 51, serine 53, and 83-86; these read YGSQ and DEVQ. Histidine 108 is a catalytic residue. Residue glycine 134 participates in NADP(+) binding. A KARI C-terminal knotted domain is found at 183–328; that stretch reads TFREETETDL…KDLRAMFSWL (146 aa). Residues aspartate 191, glutamate 195, glutamate 227, and glutamate 231 each coordinate Mg(2+). Serine 252 contributes to the substrate binding site.

This sequence belongs to the ketol-acid reductoisomerase family. The cofactor is Mg(2+).

It carries out the reaction (2R)-2,3-dihydroxy-3-methylbutanoate + NADP(+) = (2S)-2-acetolactate + NADPH + H(+). It catalyses the reaction (2R,3R)-2,3-dihydroxy-3-methylpentanoate + NADP(+) = (S)-2-ethyl-2-hydroxy-3-oxobutanoate + NADPH + H(+). It participates in amino-acid biosynthesis; L-isoleucine biosynthesis; L-isoleucine from 2-oxobutanoate: step 2/4. Its pathway is amino-acid biosynthesis; L-valine biosynthesis; L-valine from pyruvate: step 2/4. Its function is as follows. Involved in the biosynthesis of branched-chain amino acids (BCAA). Catalyzes an alkyl-migration followed by a ketol-acid reduction of (S)-2-acetolactate (S2AL) to yield (R)-2,3-dihydroxy-isovalerate. In the isomerase reaction, S2AL is rearranged via a Mg-dependent methyl migration to produce 3-hydroxy-3-methyl-2-ketobutyrate (HMKB). In the reductase reaction, this 2-ketoacid undergoes a metal-dependent reduction by NADPH to yield (R)-2,3-dihydroxy-isovalerate. In Trichormus variabilis (strain ATCC 29413 / PCC 7937) (Anabaena variabilis), this protein is Ketol-acid reductoisomerase (NADP(+)).